We begin with the raw amino-acid sequence, 172 residues long: C-phycocyanin beta chain (172 aa).

Position 72 is an N4-methylasparagine (asparagine 72). Residues cysteine 82 and cysteine 153 each coordinate (2R,3E)-phycocyanobilin.

Belongs to the phycobiliprotein family. As to quaternary structure, heterodimer of an alpha and a beta subunit, which further assembles into trimers and the trimers into hexamers. The basic functional unit of phycobiliproteins is a ring-shaped hexamer formed from two back-to-back trimers contacting via the alpha chain subunits. The trimers are composed of alpha/beta subunit heterodimers arranged around a three-fold axis of symmetry. The phycoerythrins also contain a gamma subunit which is located in the center of the hexamer. In terms of processing, contains two covalently linked bilin chromophores.

It is found in the plastid. The protein resides in the chloroplast thylakoid membrane. Light-harvesting photosynthetic bile pigment-protein from the phycobiliprotein complex (phycobilisome, PBS). Phycocyanin is the major phycobiliprotein in the PBS rod. The polypeptide is C-phycocyanin beta chain (cpcB) (Porphyra purpurea (Red seaweed)).